Consider the following 130-residue polypeptide: DNA-directed RNA polymerase subunit omega (130 aa).

2 disordered regions span residues 79-98 (EPEP…VDAD) and 109-130 (EEEL…EEDE).

The protein belongs to the RNA polymerase subunit omega family. The RNAP catalytic core consists of 2 alpha, 1 beta, 1 beta' and 1 omega subunit. When a sigma factor is associated with the core the holoenzyme is formed, which can initiate transcription.

The enzyme catalyses RNA(n) + a ribonucleoside 5'-triphosphate = RNA(n+1) + diphosphate. In terms of biological role, promotes RNA polymerase assembly. Latches the N- and C-terminal regions of the beta' subunit thereby facilitating its interaction with the beta and alpha subunits. In Bradyrhizobium diazoefficiens (strain JCM 10833 / BCRC 13528 / IAM 13628 / NBRC 14792 / USDA 110), this protein is DNA-directed RNA polymerase subunit omega (rpoZ).